The sequence spans 492 residues: Aerolysin (492 aa).

A signal peptide spans 1 to 21 (MKALKITGLSLIISATLAAQT). Intrachain disulfides connect cysteine 42/cysteine 98 and cysteine 182/cysteine 187. An interaction with host N-linked glycan region spans residues 68-84 (WQISGLANNWVILGPGY). The tract at residues 256 to 288 (YGLSEKVSTKNKFKWPLVGETEVSIEIAANQSW) is part of the transmembrane beta-barrel after proteolytic activation of the toxin and insertion into the host membrane. The interaction with glycans from host GPI-anchor stretch occupies residues 346-355 (RWGGNAWHTH). A propeptide spanning residues 446-492 (GSDSKVRRTRSVDGANTGLKLDIPLDAQELAELGFENVTLSVTPARN) is cleaved from the precursor.

It belongs to the aerolysin family. As to quaternary structure, homodimer in solution; homoheptamer in the host membrane. After binding to GPI-anchored proteins in target membranes and proteolytic removal of the C-terminal propeptide, the protein assembles into a heptameric pre-pore complex. A further conformation change leads to insertion into the host membrane. Post-translationally, proteolytic cleavage and subsequent release of the propeptide trigger a major conformation change, leading to the formation of a heptameric pre-pore that then inserts into the host membrane.

The protein localises to the secreted. The protein resides in the host cell membrane. Functionally, secreted, cytolytic toxin that forms pores in host membranes after proteolytic removal of a C-terminal propeptide, leading to destruction of the membrane permeability barrier and cell death. The pores are formed by transmembrane beta-strands and are approximately 3 nm in diameter. The chain is Aerolysin (aerA) from Aeromonas enteropelogenes (Aeromonas trota).